Here is an 84-residue protein sequence, read N- to C-terminus: Tripartite terminase subunit 2 (84 aa).

This sequence belongs to the herpesviridae TRM2 protein family. Associates with TRM1 and TRM3 to form the tripartite terminase complex.

Its subcellular location is the host nucleus. Its function is as follows. Component of the molecular motor that translocates viral genomic DNA in empty capsid during DNA packaging. Forms a tripartite terminase complex together with TRM1 and TRM3 in the host cytoplasm. Once the complex reaches the host nucleus, it interacts with the capsid portal vertex. This portal forms a ring in which genomic DNA is translocated into the capsid. This Alcelaphine herpesvirus 1 (strain C500) (AlHV-1) protein is Tripartite terminase subunit 2.